The primary structure comprises 346 residues: Leucine zipper protein 2 (346 aa).

The signal sequence occupies residues 1–17 (MKFIGAVYLLFLLPALS). 2 N-linked (GlcNAc...) asparagine glycosylation sites follow: asparagine 19 and asparagine 131. Residues 41–209 (RHLSKTSKEL…QLKALKDTVH (169 aa)) adopt a coiled-coil conformation. The leucine-zipper stretch occupies residues 162-190 (LRYGKKDLIFKGQQLMDLENKLKVAKDEL). N-linked (GlcNAc...) asparagine glycans are attached at residues asparagine 241 and asparagine 296. Positions 271–346 (SAVMRRESTG…LKKTQSDKHN (76 aa)) are disordered. The span at 293–324 (CSHNQTESSSVMKKTFGHSQSKTPEQNGQGQA) shows a compositional bias: polar residues. Residues 326 to 346 (TAEESVKTDGELKKTQSDKHN) are compositionally biased toward basic and acidic residues.

It localises to the secreted. The sequence is that of Leucine zipper protein 2 (luzp2) from Danio rerio (Zebrafish).